The sequence spans 604 residues: Replication protein A 70 kDa DNA-binding subunit B (604 aa).

A DNA-binding region (OB) is located at residues W170–E256. A C4-type zinc finger spans residues C468 to C488.

Belongs to the replication factor A protein 1 family. As to quaternary structure, heterotrimer of RPA1, RPA2 and RPA3 (canonical replication protein A complex).

It localises to the nucleus. In terms of biological role, component of the replication protein A complex (RPA) required for DNA recombination, repair and replication. The activity of RPA is mediated by single-stranded DNA binding and protein interactions. Probably involved in repair of double-strand DNA breaks (DSBs) induced by genotoxic stresses. This is Replication protein A 70 kDa DNA-binding subunit B (RPA1B) from Arabidopsis thaliana (Mouse-ear cress).